The sequence spans 375 residues: 3-dehydroquinate synthase (375 aa).

Residues 82 to 87 (SGETSK), 116 to 120 (GVVGD), 140 to 141 (TT), Lys153, and Lys162 contribute to the NAD(+) site. Zn(2+) is bound by residues Glu195, His259, and His276.

This sequence belongs to the sugar phosphate cyclases superfamily. Dehydroquinate synthase family. Requires NAD(+) as cofactor. It depends on Co(2+) as a cofactor. The cofactor is Zn(2+).

It localises to the cytoplasm. It carries out the reaction 7-phospho-2-dehydro-3-deoxy-D-arabino-heptonate = 3-dehydroquinate + phosphate. It functions in the pathway metabolic intermediate biosynthesis; chorismate biosynthesis; chorismate from D-erythrose 4-phosphate and phosphoenolpyruvate: step 2/7. Functionally, catalyzes the conversion of 3-deoxy-D-arabino-heptulosonate 7-phosphate (DAHP) to dehydroquinate (DHQ). This Rhodopirellula baltica (strain DSM 10527 / NCIMB 13988 / SH1) protein is 3-dehydroquinate synthase.